The chain runs to 198 residues: FMN-dependent NADH:quinone oxidoreductase (198 aa).

FMN contacts are provided by residues serine 10, 16 to 18 (SQS), 94 to 97 (MYNF), and 138 to 141 (TRGG).

This sequence belongs to the azoreductase type 1 family. In terms of assembly, homodimer. It depends on FMN as a cofactor.

It carries out the reaction 2 a quinone + NADH + H(+) = 2 a 1,4-benzosemiquinone + NAD(+). It catalyses the reaction N,N-dimethyl-1,4-phenylenediamine + anthranilate + 2 NAD(+) = 2-(4-dimethylaminophenyl)diazenylbenzoate + 2 NADH + 2 H(+). Its function is as follows. Quinone reductase that provides resistance to thiol-specific stress caused by electrophilic quinones. In terms of biological role, also exhibits azoreductase activity. Catalyzes the reductive cleavage of the azo bond in aromatic azo compounds to the corresponding amines. In Shewanella sp. (strain MR-4), this protein is FMN-dependent NADH:quinone oxidoreductase.